Reading from the N-terminus, the 485-residue chain is GTPase Der (485 aa).

EngA-type G domains are found at residues 3 to 167 (PTIA…PEPE) and 176 to 349 (PVFA…NAAM). GTP-binding positions include 9-16 (GRPNVGKS), 56-60 (DTGGF), 119-122 (NKGE), 182-189 (GRPNVGKS), 229-233 (DTAGV), and 294-297 (NKWD). The KH-like domain maps to 350–434 (IKMPTPKITR…PLRIQYNVSE (85 aa)). Residues 435-485 (NPYENADDKPKKKPLRRVSLSNRIEKREGRKEEKNRFKKKTKVSVKKQFSK) are disordered. The span at 457–469 (RIEKREGRKEEKN) shows a compositional bias: basic and acidic residues. Basic residues predominate over residues 470–485 (RFKKKTKVSVKKQFSK).

The protein belongs to the TRAFAC class TrmE-Era-EngA-EngB-Septin-like GTPase superfamily. EngA (Der) GTPase family. In terms of assembly, associates with the 50S ribosomal subunit.

Functionally, GTPase that plays an essential role in the late steps of ribosome biogenesis. The chain is GTPase Der from Neisseria meningitidis serogroup A / serotype 4A (strain DSM 15465 / Z2491).